Consider the following 87-residue polypeptide: Small ribosomal subunit protein bS20 (87 aa).

The segment at 1-26 (MANTKSALKRIRQTATRTARNRAVTS) is disordered. Residues 13 to 23 (QTATRTARNRA) show a composition bias toward low complexity.

This sequence belongs to the bacterial ribosomal protein bS20 family.

In terms of biological role, binds directly to 16S ribosomal RNA. The chain is Small ribosomal subunit protein bS20 from Akkermansia muciniphila (strain ATCC BAA-835 / DSM 22959 / JCM 33894 / BCRC 81048 / CCUG 64013 / CIP 107961 / Muc).